A 428-amino-acid chain; its full sequence is Enolase 1 (428 aa).

A (2R)-2-phosphoglycerate-binding site is contributed by glutamine 167. Residue glutamate 209 is the Proton donor of the active site. Residues aspartate 246, glutamate 288, and aspartate 315 each coordinate Mg(2+). 4 residues coordinate (2R)-2-phosphoglycerate: lysine 340, arginine 369, serine 370, and lysine 391. Lysine 340 serves as the catalytic Proton acceptor.

The protein belongs to the enolase family. In terms of assembly, component of the RNA degradosome, a multiprotein complex involved in RNA processing and mRNA degradation. Requires Mg(2+) as cofactor.

It localises to the cytoplasm. The protein localises to the secreted. The protein resides in the cell surface. It catalyses the reaction (2R)-2-phosphoglycerate = phosphoenolpyruvate + H2O. The protein operates within carbohydrate degradation; glycolysis; pyruvate from D-glyceraldehyde 3-phosphate: step 4/5. Functionally, catalyzes the reversible conversion of 2-phosphoglycerate (2-PG) into phosphoenolpyruvate (PEP). It is essential for the degradation of carbohydrates via glycolysis. In Pseudomonas syringae pv. syringae (strain B728a), this protein is Enolase 1.